The sequence spans 296 residues: Nucleotide-binding protein ABC3036 (296 aa).

An ATP-binding site is contributed by 13–20 (GMSGAGKS). 64–67 (DLRG) serves as a coordination point for GTP.

The protein belongs to the RapZ-like family.

In terms of biological role, displays ATPase and GTPase activities. The chain is Nucleotide-binding protein ABC3036 from Shouchella clausii (strain KSM-K16) (Alkalihalobacillus clausii).